Reading from the N-terminus, the 245-residue chain is Zinc import ATP-binding protein ZnuC (245 aa).

In terms of domain architecture, ABC transporter spans 27–244 (LTADSLTLFY…AKFLSVFPNN (218 aa)). 59-66 (GPNGGGKT) contributes to the ATP binding site.

The protein belongs to the ABC transporter superfamily. Zinc importer (TC 3.A.1.15.5) family. The complex is composed of two ATP-binding proteins (ZnuC), two transmembrane proteins (ZnuB) and a solute-binding protein (ZnuA).

The protein resides in the cell inner membrane. It carries out the reaction Zn(2+)(out) + ATP(in) + H2O(in) = Zn(2+)(in) + ADP(in) + phosphate(in) + H(+)(in). Functionally, part of the ABC transporter complex ZnuABC involved in zinc import. Responsible for energy coupling to the transport system. This is Zinc import ATP-binding protein ZnuC from Anaplasma marginale (strain St. Maries).